The chain runs to 875 residues: MDPAKATPMFAQYLQIKEQYPDCILFYRLGDFYETFMDDAELVARELELVLTGRDAGKDMGRVPMAGIPYHAAEAYIARLIEKGYKVAICDQLEDPKKAKGLVKRDVTRVVTPGTLVEPRLLPEKANNFLAAIAWSRTGFGLAVVDLSTGEFAAAQMNGADSLRLLLEEIGRLEPREVILEPGLAAEPSVTGPLKASGIAVSVFEGRHFNHANAYRKLTEHFGTANLSGFGCEDLELATSAAGAALAYLEEMHKASLGHVSGLAVYYPGDYMVLDPATRRNLELTRSLRDGGRRGTLLWVMDRTVTAMGARLLKSWLERPLLDLRQIHARHEAVGELVHRPVLRADLRALLQEVHDLERLAGRVAVGSANARDLVALKQSLVALPSIRVALEDVRAERLVELRDQLDMLDDVRDLIEHAIADEPPVALTEGGILKDGFHPEVDELRRIARDGKAWIAQVEARERERTGIKSLKIGYNKVFGYYLAVTKPNLPLVPPDYIRKQTLANEERFITPELKELEEKVLHAAERVMDLEYELFVEIRQRVAAEVTRIQRSARAVAELDALASFAEVASLYGYCRPLVDGSTVLELKGSRHPVLERVMEEGAFVPNDLLVDTGENRVLLITGPNMGGKSTVMRQAALAVILAQAGSFVPAESAHIGLVDRVFTRVGASDDLATGRSTFMVEMTEVANILHSATERSLVVLDEVGRGTATFDGLSIAWAITEHIHQAIGCRTLFATHYHELCELEGILPGVKNYSVAVMEKGEDIIFLRKLVRGGADRSYGIQVGRLAGLPASVVERAREILATLEEQEGERKSRREAAAQRLRRQPAVQLTFFEPKKDPVVEELLGLNVMALTPIEALNTLYQLQAKAKENR.

625–632 (GPNMGGKS) is an ATP binding site.

Belongs to the DNA mismatch repair MutS family.

Functionally, this protein is involved in the repair of mismatches in DNA. It is possible that it carries out the mismatch recognition step. This protein has a weak ATPase activity. In Symbiobacterium thermophilum (strain DSM 24528 / JCM 14929 / IAM 14863 / T), this protein is DNA mismatch repair protein MutS.